A 365-amino-acid polypeptide reads, in one-letter code: MKFYEYSAKEIFRAEGISTPRGGVAETPEEAERIAAELGCDVAVKSQVLTGGRGKAGGIRFASPSGVAEVTGDLLSSEVRGETVEKVLIEEKIPIDRELYVSAVIDRTAKMPLIMASAEGGVDIEELAARSPEKIVRYHINPLDEFLPYEAREIARKMGLESELIPSVGGVIWKLYQLFRKYDARLAEINPLVISGDSVIAADAKLEVDDDSIYRHREFMEMEEYEPEEFAFVKLDGDIAVIGNGAGLTLTAMDLIKLNGEPATFLDIGGGASEDVIRRALDLVISHPSVRVVFLNVLGGITRADDVARGVVNALRDARRDVPLVIRLTGTNEEEGQRILREAGIPFETSLERAAEKAVEIAKNL.

The 222-residue stretch at Lys9 to Phe230 folds into the ATP-grasp domain. ATP is bound by residues Lys45, Gly52–Gly54, Glu90, Ile93, and Glu98. Positions 190 and 203 each coordinate Mg(2+). Substrate is bound by residues Asn244 and Gly300–Thr302.

This sequence belongs to the succinate/malate CoA ligase beta subunit family. As to quaternary structure, heterotetramer of two alpha and two beta subunits. Requires Mg(2+) as cofactor.

It catalyses the reaction succinate + ATP + CoA = succinyl-CoA + ADP + phosphate. The catalysed reaction is GTP + succinate + CoA = succinyl-CoA + GDP + phosphate. Its pathway is carbohydrate metabolism; tricarboxylic acid cycle; succinate from succinyl-CoA (ligase route): step 1/1. Succinyl-CoA synthetase functions in the citric acid cycle (TCA), coupling the hydrolysis of succinyl-CoA to the synthesis of either ATP or GTP and thus represents the only step of substrate-level phosphorylation in the TCA. The beta subunit provides nucleotide specificity of the enzyme and binds the substrate succinate, while the binding sites for coenzyme A and phosphate are found in the alpha subunit. This Methanothermobacter thermautotrophicus (strain ATCC 29096 / DSM 1053 / JCM 10044 / NBRC 100330 / Delta H) (Methanobacterium thermoautotrophicum) protein is Succinate--CoA ligase [ADP-forming] subunit beta.